A 429-amino-acid chain; its full sequence is 3-phosphoshikimate 1-carboxyvinyltransferase (429 aa).

3 residues coordinate 3-phosphoshikimate: K23, S24, and R28. K23 lines the phosphoenolpyruvate pocket. Phosphoenolpyruvate is bound by residues G95 and R123. S168, Q170, D316, and K343 together coordinate 3-phosphoshikimate. Q170 provides a ligand contact to phosphoenolpyruvate. Residue D316 is the Proton acceptor of the active site. Residues R347 and R389 each coordinate phosphoenolpyruvate.

The protein belongs to the EPSP synthase family. Monomer.

It is found in the cytoplasm. The catalysed reaction is 3-phosphoshikimate + phosphoenolpyruvate = 5-O-(1-carboxyvinyl)-3-phosphoshikimate + phosphate. It functions in the pathway metabolic intermediate biosynthesis; chorismate biosynthesis; chorismate from D-erythrose 4-phosphate and phosphoenolpyruvate: step 6/7. In terms of biological role, catalyzes the transfer of the enolpyruvyl moiety of phosphoenolpyruvate (PEP) to the 5-hydroxyl of shikimate-3-phosphate (S3P) to produce enolpyruvyl shikimate-3-phosphate and inorganic phosphate. This Bacillus cereus (strain ATCC 10987 / NRS 248) protein is 3-phosphoshikimate 1-carboxyvinyltransferase.